The following is a 157-amino-acid chain: Small ribosomal subunit protein uS7 (157 aa).

The protein belongs to the universal ribosomal protein uS7 family. In terms of assembly, part of the 30S ribosomal subunit. Contacts proteins S9 and S11.

In terms of biological role, one of the primary rRNA binding proteins, it binds directly to 16S rRNA where it nucleates assembly of the head domain of the 30S subunit. Is located at the subunit interface close to the decoding center, probably blocks exit of the E-site tRNA. The polypeptide is Small ribosomal subunit protein uS7 (Chlamydia pneumoniae (Chlamydophila pneumoniae)).